A 450-amino-acid chain; its full sequence is MYTKDTIVAIATPQGNGGIGIIRISGIDALAIAEKLTKKQLKPRYATFCNVYNDNEIIDHGIVIFFKAPLSYTGEDVVEIQAHGNPFILNLIIKAALNCGARMAKAGEFTERAFLNNKLDLTQAEAVADIINASSEIAAKSAAKSLQGDFSKEINNLLEKLIYLRMYVEASIDFPEEEINFLEDQKIHSSLEEIYKVILAVKNSCKQGVILAEGITLILVGKPNAGKSSLLNALAGKESAIVTSIAGTTRDIVKEHIQINGVPMHIIDTAGLRNSDDIIESEGIKRAIKKIQEADQVLFVTDDYTNSQVKFSDIKEIIPEFYDQIPKDIDITYVHNKIDLLKEVPHNHANHIYISAENNIGIDKLKEHILNKVGYTNQNESIYTARERHVTAINNAFEHIKLAKEQLELGNGELLAEELLIVQEYLNSITGEFSSDDLLGEIFSSFCIGK.

Arg23, Glu79, and Lys118 together coordinate (6S)-5-formyl-5,6,7,8-tetrahydrofolate. A TrmE-type G domain is found at Gly214–Gly374. Position 224 (Asn224) interacts with K(+). GTP contacts are provided by residues Asn224–Ser229, Thr243–Thr249, and Asp268–Gly271. Mg(2+) is bound at residue Ser228. K(+)-binding residues include Thr243, Ile245, and Thr248. Thr249 contacts Mg(2+). Position 450 (Lys450) interacts with (6S)-5-formyl-5,6,7,8-tetrahydrofolate.

Belongs to the TRAFAC class TrmE-Era-EngA-EngB-Septin-like GTPase superfamily. TrmE GTPase family. Homodimer. Heterotetramer of two MnmE and two MnmG subunits. It depends on K(+) as a cofactor.

It is found in the cytoplasm. Exhibits a very high intrinsic GTPase hydrolysis rate. Involved in the addition of a carboxymethylaminomethyl (cmnm) group at the wobble position (U34) of certain tRNAs, forming tRNA-cmnm(5)s(2)U34. This is tRNA modification GTPase MnmE from Francisella tularensis subsp. novicida (strain U112).